The chain runs to 385 residues: MSLGLLESQLRLKVFGRLQVIRQHLRMTNHTVKDGECLLTKAGCAGVITLNRPKALNALNLGMIRLIYPQLGLWEEDPETYLVIIKGVGGKAFCAGGDIRAVTDAGKAGDRLAQDFFREEYILNNAIGTYKKPYVALIDGITMGGGVGLSVHGHFRVASENTLFAMPETAIGLFPDVGGGYFLPRLPGKLGLYLALTGFRLKGSDVQKAGIATHFVESEKIPSLEQDLVAMKCPSKENVADVLDSYHNKSYAAQDKPFVLAEHLDKINSLFSASSVEAIIENLRCDGSSFALKQLQTLSTMSPTSLKITFRQLKEGSSMSLQEVLTMEYRLSQACMKGYDFYEGVRAVLIDKNQNAKWNPELLEEVTDDYIDSYFTSLGNSDLKL.

The substrate site is built by E120, G145, E168, and D176.

It belongs to the enoyl-CoA hydratase/isomerase family.

It is found in the mitochondrion. The enzyme catalyses 3-hydroxy-2-methylpropanoyl-CoA + H2O = 3-hydroxy-2-methylpropanoate + CoA + H(+). Its pathway is amino-acid degradation; L-valine degradation. Hydrolyzes 3-hydroxyisobutyryl-CoA (HIBYL-CoA), a saline catabolite. Has high activity toward isobutyryl-CoA. Could be an isobutyryl-CoA dehydrogenase that functions in valine catabolism. Also hydrolyzes 3-hydroxypropanoyl-CoA. This chain is 3-hydroxyisobutyryl-CoA hydrolase, mitochondrial (hibch), found in Xenopus tropicalis (Western clawed frog).